Reading from the N-terminus, the 234-residue chain is MTNQLIYTGKAKDIYSTKDENVIRTVYKDQATMLNGARKETIDGKGALNNQISSLIFEKLNMAGVVTHYIEQISKNEQLNKKVDIIPLEVVLRNVTAGSFSKRFGVEEGHVLETPIVEFYYKNDNLNDPFINDEHVKFLGIVNDEEIAYLKGETRHINELLKDWFAQIGLNLIDFKLEFGFDKDGKIILADEFSPDNCRLWDADGNHMDKDVFRRDLGSLTDVYQVVLEKLIAL.

Belongs to the SAICAR synthetase family.

The catalysed reaction is 5-amino-1-(5-phospho-D-ribosyl)imidazole-4-carboxylate + L-aspartate + ATP = (2S)-2-[5-amino-1-(5-phospho-beta-D-ribosyl)imidazole-4-carboxamido]succinate + ADP + phosphate + 2 H(+). The protein operates within purine metabolism; IMP biosynthesis via de novo pathway; 5-amino-1-(5-phospho-D-ribosyl)imidazole-4-carboxamide from 5-amino-1-(5-phospho-D-ribosyl)imidazole-4-carboxylate: step 1/2. The chain is Phosphoribosylaminoimidazole-succinocarboxamide synthase from Streptococcus agalactiae serotype V (strain ATCC BAA-611 / 2603 V/R).